Reading from the N-terminus, the 228-residue chain is UPF0758 protein CLK_2387 (228 aa).

In terms of domain architecture, MPN spans 106-228 (KISTPLDVSN…YVSMKEKGTI (123 aa)). Residues histidine 177, histidine 179, and aspartate 190 each coordinate Zn(2+). The JAMM motif motif lies at 177-190 (HNHPSGDPTPSKED).

This sequence belongs to the UPF0758 family.

The sequence is that of UPF0758 protein CLK_2387 from Clostridium botulinum (strain Loch Maree / Type A3).